We begin with the raw amino-acid sequence, 547 residues long: MFS-type transporter ltbE (547 aa).

The segment at 1–23 (MEIAAETTGPAGVTTDVTNAEES) is disordered. Helical transmembrane passes span 33–53 (QGWA…VLAI), 74–94 (DIGW…PTCG), 104–124 (WVYC…AVAP), 135–155 (ISGL…SYCV), 165–185 (PIVL…GGSI), 195–215 (FIFW…WFTL), 240–260 (ATLL…GGIV), 267–287 (KVFG…CLQW), 310–330 (GFMM…PIYF), 343–363 (INLL…GSLA), 370–390 (VPFM…YQLV), 399–419 (WIGF…MPIL), and 432–452 (TGLV…PSVG). Asn463 carries N-linked (GlcNAc...) asparagine glycosylation. Residues 506–526 (VFWVGVATPALAWIASWAMEW) traverse the membrane as a helical segment.

The protein belongs to the major facilitator superfamily. TCR/Tet family.

The protein localises to the cell membrane. Its function is as follows. MFS-type transporter; part of the gene cluster that mediates the biosynthesis of luteodienoside A, a glycosylated polyketide consisting of an unusual 1-O-beta-D-glucopyranosyl-myo-inositol (glucinol) ester of 3-hydroxy-2,2,4-trimethylocta-4,6-dienoic acid. LtbE is probably involved in the secretion of luteodienoside A. The protein is MFS-type transporter ltbE of Aspergillus luteorubrus.